We begin with the raw amino-acid sequence, 481 residues long: UDP-N-acetylmuramate--L-alanine ligase (481 aa).

An ATP-binding site is contributed by 135-141 (GTHGKTT).

This sequence belongs to the MurCDEF family.

The protein localises to the cytoplasm. The catalysed reaction is UDP-N-acetyl-alpha-D-muramate + L-alanine + ATP = UDP-N-acetyl-alpha-D-muramoyl-L-alanine + ADP + phosphate + H(+). Its pathway is cell wall biogenesis; peptidoglycan biosynthesis. Cell wall formation. The protein is UDP-N-acetylmuramate--L-alanine ligase of Nostoc punctiforme (strain ATCC 29133 / PCC 73102).